The sequence spans 156 residues: uncharacterized protein (156 aa).

The region spanning 11–156 is the N-acetyltransferase domain; it reads EEFRSYLTYT…ETDVVMSKKL (146 aa).

The protein belongs to the acetyltransferase family. Homodimer.

This is an uncharacterized protein from Bacillus subtilis (strain 168).